A 296-amino-acid chain; its full sequence is Phosphatidylserine decarboxylase proenzyme (296 aa).

Active-site charge relay system; for autoendoproteolytic cleavage activity residues include Asp-113, His-169, and Ser-256. The active-site Schiff-base intermediate with substrate; via pyruvic acid; for decarboxylase activity is the Ser-256. Position 256 is a pyruvic acid (Ser); by autocatalysis (Ser-256).

The protein belongs to the phosphatidylserine decarboxylase family. PSD-B subfamily. Prokaryotic type II sub-subfamily. In terms of assembly, heterodimer of a large membrane-associated beta subunit and a small pyruvoyl-containing alpha subunit. Pyruvate serves as cofactor. Post-translationally, is synthesized initially as an inactive proenzyme. Formation of the active enzyme involves a self-maturation process in which the active site pyruvoyl group is generated from an internal serine residue via an autocatalytic post-translational modification. Two non-identical subunits are generated from the proenzyme in this reaction, and the pyruvate is formed at the N-terminus of the alpha chain, which is derived from the carboxyl end of the proenzyme. The autoendoproteolytic cleavage occurs by a canonical serine protease mechanism, in which the side chain hydroxyl group of the serine supplies its oxygen atom to form the C-terminus of the beta chain, while the remainder of the serine residue undergoes an oxidative deamination to produce ammonia and the pyruvoyl prosthetic group on the alpha chain. During this reaction, the Ser that is part of the protease active site of the proenzyme becomes the pyruvoyl prosthetic group, which constitutes an essential element of the active site of the mature decarboxylase.

The protein resides in the cell membrane. It carries out the reaction a 1,2-diacyl-sn-glycero-3-phospho-L-serine + H(+) = a 1,2-diacyl-sn-glycero-3-phosphoethanolamine + CO2. The protein operates within phospholipid metabolism; phosphatidylethanolamine biosynthesis; phosphatidylethanolamine from CDP-diacylglycerol: step 2/2. Functionally, catalyzes the formation of phosphatidylethanolamine (PtdEtn) from phosphatidylserine (PtdSer). In Clostridium beijerinckii (strain ATCC 51743 / NCIMB 8052) (Clostridium acetobutylicum), this protein is Phosphatidylserine decarboxylase proenzyme.